The chain runs to 58 residues: Small ribosomal subunit protein bS21 (58 aa).

The protein belongs to the bacterial ribosomal protein bS21 family.

This chain is Small ribosomal subunit protein bS21, found in Lactobacillus acidophilus (strain ATCC 700396 / NCK56 / N2 / NCFM).